A 580-amino-acid chain; its full sequence is MSRLARDAAAALRRGLLATRRDATAAASTSAATVSRGRRARAVSTTTTTSSSSSSSAAVDARDADADAADEDAWETVVGLELHAQVAADTKLFSGAARQYGARVNANVAPFDAALPGSLPSVNARAVELATRLGVALGGEIHRASRFERKHYAYPDLPHGYQITQRRDPIVRGGRIDVDVGAGATRRLRIEQIQLEMDTGKSVNKTGGGGGGTTTTTIDLNRAGCALVEIVTRPDLRGGEEAAAAAEAFQKTLRFLGVGDANMEEGSLRVDVNVSVRRRGDGGDDGAALGERCEVKNLNSFRSIASAVRFEARRHRELIARGENVERETRSFDPANGETAPLRREQTLDYRFTPEPDVPPIVLSDEYVAAIARDTPELPDVAIRRLADVRGDHALPLKLATAVATHASTARYYEAALSAAKRSAAPRDVDVDAAAVARFVVGELTGEVKRASVAGRVEPLLGLPARLSPERVGELLAAVAAGETTARMAKARPMGWRDVVDALFPPVGDGEGGGEGGGDAAVEAMCRDIVCGMPEEVALFKAGKTRLMGKFVGEAMRRTNGRADPKVVSRALTRALSEEV.

2 stretches are compositionally biased toward low complexity: residues 20 to 35 (RRDA…ATVS) and 42 to 59 (AVST…SAAV). Residues 20-64 (RRDATAAASTSAATVSRGRRARAVSTTTTTSSSSSSSAAVDARDA) form a disordered region.

The protein belongs to the GatB/GatE family. GatB subfamily. As to quaternary structure, subunit of the heterotrimeric GatCAB amidotransferase (AdT) complex, composed of A, B and C subunits.

Its subcellular location is the mitochondrion. It is found in the plastid. It localises to the chloroplast. The catalysed reaction is L-glutamyl-tRNA(Gln) + L-glutamine + ATP + H2O = L-glutaminyl-tRNA(Gln) + L-glutamate + ADP + phosphate + H(+). In terms of biological role, allows the formation of correctly charged Gln-tRNA(Gln) through the transamidation of misacylated Glu-tRNA(Gln) in chloroplasts and mitochondria. The reaction takes place in the presence of glutamine and ATP through an activated gamma-phospho-Glu-tRNA(Gln). The protein is Glutamyl-tRNA(Gln) amidotransferase subunit B-2, chloroplastic/mitochondrial of Micromonas pusilla (strain CCMP1545) (Picoplanktonic green alga).